Reading from the N-terminus, the 126-residue chain is Large-conductance mechanosensitive channel (126 aa).

The next 2 membrane-spanning stretches (helical) occupy residues 17-37 (VDLA…SSFI) and 70-90 (GLFL…FLII).

It belongs to the MscL family. In terms of assembly, homopentamer.

The protein localises to the cell inner membrane. Its function is as follows. Channel that opens in response to stretch forces in the membrane lipid bilayer. May participate in the regulation of osmotic pressure changes within the cell. The polypeptide is Large-conductance mechanosensitive channel (Flavobacterium johnsoniae (strain ATCC 17061 / DSM 2064 / JCM 8514 / BCRC 14874 / CCUG 350202 / NBRC 14942 / NCIMB 11054 / UW101) (Cytophaga johnsonae)).